Consider the following 729-residue polypeptide: MLYKGDTLYLDWLEDGIAELVFDAPGSVNKLDTATVASLGQALDVLEKQTDLKGLLLRSNKAAFIVGADITEFLSLFLVPEEQLSQWLHFANSVFNRLEDLPVPTLSAINGYALGGGCECVLATDYRLVTPDLRIGLPETKLGIMPGFGGSVRMPRMLGADSALEIIAAGKDIGAEQALKIGLVDGVVKPEKLLDGAIAVLRQAIDGSLDWKAKRQPKLEPLKLSKIEAAMSFTIAKGMVAQTAGKHYPAPMIAVKTIEAAARFGREEALNLENKSFVPLAHTNEARALVGIFLNDQFVKGKAKKLTKDVETPKQAAVLGAGIMGGGIAYQSAWKGVPVIMKDINDKSLTLGMTEAAKLLNKQLERGRIDGLKLAGVISTIHPTLNYAGFDRVDVVVEAVVENPKVKKAVLAETEDNVRPDTVLASNTSTIPISELASALKRPENFCGMHFFNPVHRMPLVEIIRGEKSSDETIAKVVAWASKMGKTPIVVNDCPGFFVNRVLFPYFAGFSQLLRDGADFRKVDKVMEKQFGWPMGPAYLLDVVGIDTAHHAQAVMAAGFPQRMQKDYRDAIDALFDASRYGQKNGLGFWRYKEDSKGKPKKEEDAAVDSLLAEVSQPKRDFSDEEIIARMMIPMVNEVVRCLEEGIIASPAEADMALVYGLGFPPFHGGAFRWLDTLGSAKYLDMAQQYQHLGPLYEVPEGLRNKARHNEPYYPPVEPARPVGDLKTA.

Positions 1–189 are enoyl-CoA hydratase/isomerase; sequence MLYKGDTLYL…KIGLVDGVVK (189 aa). D296 is a binding site for substrate. Positions 311–729 are 3-hydroxyacyl-CoA dehydrogenase; the sequence is ETPKQAAVLG…ARPVGDLKTA (419 aa). Residues M324, D343, 400–402, K407, and S429 contribute to the NAD(+) site; that span reads VVE. H450 serves as the catalytic For 3-hydroxyacyl-CoA dehydrogenase activity. N453 is a binding site for NAD(+). Substrate is bound by residues N500 and Y660. A disordered region spans residues 708–729; sequence RHNEPYYPPVEPARPVGDLKTA.

It in the N-terminal section; belongs to the enoyl-CoA hydratase/isomerase family. This sequence in the C-terminal section; belongs to the 3-hydroxyacyl-CoA dehydrogenase family. As to quaternary structure, heterotetramer of two alpha chains (FadB) and two beta chains (FadA).

The enzyme catalyses a (3S)-3-hydroxyacyl-CoA + NAD(+) = a 3-oxoacyl-CoA + NADH + H(+). It carries out the reaction a (3S)-3-hydroxyacyl-CoA = a (2E)-enoyl-CoA + H2O. It catalyses the reaction a 4-saturated-(3S)-3-hydroxyacyl-CoA = a (3E)-enoyl-CoA + H2O. The catalysed reaction is (3S)-3-hydroxybutanoyl-CoA = (3R)-3-hydroxybutanoyl-CoA. The enzyme catalyses a (3Z)-enoyl-CoA = a 4-saturated (2E)-enoyl-CoA. It carries out the reaction a (3E)-enoyl-CoA = a 4-saturated (2E)-enoyl-CoA. It participates in lipid metabolism; fatty acid beta-oxidation. Involved in the aerobic and anaerobic degradation of long-chain fatty acids via beta-oxidation cycle. Catalyzes the formation of 3-oxoacyl-CoA from enoyl-CoA via L-3-hydroxyacyl-CoA. It can also use D-3-hydroxyacyl-CoA and cis-3-enoyl-CoA as substrate. The chain is Fatty acid oxidation complex subunit alpha from Citrobacter koseri (strain ATCC BAA-895 / CDC 4225-83 / SGSC4696).